The sequence spans 128 residues: Protein ripply2 (128 aa).

Residues 1–64 (MDTTESAESA…ALPSGPGMAE (64 aa)) form a disordered region. Residues 17–28 (PSRSRCPPSAQP) are compositionally biased toward low complexity. The WRPW motif signature appears at 34–37 (WRPW). Positions 74–109 (HPVRLFWPKSKCYDYLYQEAETLLKNFPIQATISFY) are ripply homology domain.

This sequence belongs to the ripply family. As to expression, expressed in the embryonic anterior presomitic mesoderm. First expressed in S-I at 8.5 dpc, where expression is maintained until 13.5 dpc, with an additional stripe of expression sometimes seen in the rostral part of S0 and S-I.

It localises to the nucleus. Its function is as follows. Plays a role in somitogenesis. Required for somite segregation and establishment of rostrocaudal polarity in somites. This is Protein ripply2 from Mus musculus (Mouse).